The following is a 464-amino-acid chain: Glutamyl-tRNA reductase (464 aa).

Substrate-binding positions include 47 to 50, Ser145, 150 to 152, and Gln156; these read TCNR and EPQ. Cys48 (nucleophile) is an active-site residue. 225-230 contacts NADP(+); it reads AAGEMN.

This sequence belongs to the glutamyl-tRNA reductase family. As to quaternary structure, homodimer.

It catalyses the reaction (S)-4-amino-5-oxopentanoate + tRNA(Glu) + NADP(+) = L-glutamyl-tRNA(Glu) + NADPH + H(+). The protein operates within porphyrin-containing compound metabolism; protoporphyrin-IX biosynthesis; 5-aminolevulinate from L-glutamyl-tRNA(Glu): step 1/2. Its function is as follows. Catalyzes the NADPH-dependent reduction of glutamyl-tRNA(Glu) to glutamate 1-semialdehyde (GSA). This chain is Glutamyl-tRNA reductase, found in Psychrobacter cryohalolentis (strain ATCC BAA-1226 / DSM 17306 / VKM B-2378 / K5).